Consider the following 401-residue polypeptide: MTLHTSPILHSLLDTDAYKLHMQQAVYHHYYDVDVAAEFRCRGDELLGVYADEIAHQVDLMRFLSLSDDEFTYLSSLPFFQQDYLNWLRNFRFNPQQVSIKNNAGKLDIRITGPWREVILWEVPLLAVISEVVHRHRSPNVTTEQAVAQLSTSLESFRQNSMNVDLSQFKLMDFGTRRRFSGDIQQTIVTALQADFPYLIGTSNYDLARRLGITPVGTQAHEWFQAHQQISPTLANSQRAALQMWLREYPTHLGIALTDCITMDAFLRDFDLPFAEAYQGLRHDSGDPVDWGEKAIAHYQRLNIDPMSKTLVFSDNLNLDKALVLYRHFCQRVNLVFGMGTRLTCDIPGVKPLNIVIKLVECNGKPVAKLSDSPGKTICQDQNFVCELRKAFDLPRVKKAS.

Position 221 is a phosphohistidine; by autocatalysis (His221).

The protein belongs to the NAPRTase family. Transiently phosphorylated on a His residue during the reaction cycle. Phosphorylation strongly increases the affinity for substrates and increases the rate of nicotinate D-ribonucleotide production. Dephosphorylation regenerates the low-affinity form of the enzyme, leading to product release.

It carries out the reaction nicotinate + 5-phospho-alpha-D-ribose 1-diphosphate + ATP + H2O = nicotinate beta-D-ribonucleotide + ADP + phosphate + diphosphate. It functions in the pathway cofactor biosynthesis; NAD(+) biosynthesis; nicotinate D-ribonucleotide from nicotinate: step 1/1. In terms of biological role, catalyzes the synthesis of beta-nicotinate D-ribonucleotide from nicotinate and 5-phospho-D-ribose 1-phosphate at the expense of ATP. This chain is Nicotinate phosphoribosyltransferase, found in Pectobacterium atrosepticum (strain SCRI 1043 / ATCC BAA-672) (Erwinia carotovora subsp. atroseptica).